Consider the following 306-residue polypeptide: MQPPGDDAAPRCPFAGAHAPDAPHVPEAAGDDAQAGWHRAQLDFSQSMSYGDYLSLDPILDAQHPRSPDHNEMLFIIQHQTSELWMKLALYELRAALASIRDDALPPAFKMLARVSRVLEQLVQAWNVLATMTPSEYSAMRPYLGASSGFQSYQYRELEFILGNKNAQMLRPHAHRPAIHAHLEASLQAPSLYDEVIRLLARRGFPIAPERLDADWTQPTRHDRTVEAAWLAVYREPNAHWELYEMAEELVDLEDAFRQWRFRHVTTVERIIGFKQGTGGTSGAPYLRKMLDVVLFPELWHVRTTL.

Positions 1–33 (MQPPGDDAAPRCPFAGAHAPDAPHVPEAAGDDA) are disordered. Residues 75 to 79 (FIIQH), Tyr-137, and Arg-141 each bind substrate. His-264 provides a ligand contact to heme. Residue Thr-278 coordinates substrate.

The protein belongs to the tryptophan 2,3-dioxygenase family. Homotetramer. Requires heme as cofactor.

The catalysed reaction is L-tryptophan + O2 = N-formyl-L-kynurenine. It functions in the pathway amino-acid degradation; L-tryptophan degradation via kynurenine pathway; L-kynurenine from L-tryptophan: step 1/2. Heme-dependent dioxygenase that catalyzes the oxidative cleavage of the L-tryptophan (L-Trp) pyrrole ring and converts L-tryptophan to N-formyl-L-kynurenine. Catalyzes the oxidative cleavage of the indole moiety. The polypeptide is Tryptophan 2,3-dioxygenase (Burkholderia pseudomallei (strain 1106a)).